Reading from the N-terminus, the 1528-residue chain is Zinc finger FYVE domain-containing protein 16 (1528 aa).

Ser-120 carries the phosphoserine modification. The disordered stretch occupies residues 629–664 (TQAVGGARPKQLLSLPPGTRSSKELNKPDVVDVPES). Basic and acidic residues predominate over residues 649-658 (SSKELNKPDV). The FYVE-type zinc finger occupies 735 to 793 (DSEAPNCMNCQVKFTFTKRRHHCRACGKVFCGVCCNRKCKLQYLEKEARVCVICYETIN). Residues Cys-741, Cys-744, Cys-757, Cys-760, Cys-765, Cys-768, Cys-785, and Cys-788 each contribute to the Zn(2+) site. Phosphoserine occurs at positions 803, 833, 884, and 927. A disordered region spans residues 819–849 (TDQPLQETQTSSTPSPTTLPISALKQPNVEG). Positions 821–838 (QPLQETQTSSTPSPTTLP) are enriched in low complexity. The disordered stretch occupies residues 928–949 (PTCHTAPVERLPGNTGTEGLPM).

Interacts (via C-terminus) with TOM1 (via C-terminus); interaction is required to target TOM1 to endosomes. Does not interact with TOM1L1 or TOM1L2.

Its subcellular location is the cytoplasm. The protein localises to the early endosome membrane. Functionally, may be involved in regulating membrane trafficking in the endosomal pathway. Overexpression induces endosome aggregation. Required to target TOM1 to endosomes. The chain is Zinc finger FYVE domain-containing protein 16 (Zfyve16) from Mus musculus (Mouse).